Consider the following 100-residue polypeptide: NADH-quinone oxidoreductase subunit K (100 aa).

The next 3 membrane-spanning stretches (helical) occupy residues 4-24, 28-48, and 60-80; these read LQHG…GLLI, LLFM…AFVV, and VMYI…LALL.

This sequence belongs to the complex I subunit 4L family. As to quaternary structure, NDH-1 is composed of 13 different subunits. Subunits NuoA, H, J, K, L, M, N constitute the membrane sector of the complex.

Its subcellular location is the cell inner membrane. It carries out the reaction a quinone + NADH + 5 H(+)(in) = a quinol + NAD(+) + 4 H(+)(out). NDH-1 shuttles electrons from NADH, via FMN and iron-sulfur (Fe-S) centers, to quinones in the respiratory chain. The immediate electron acceptor for the enzyme in this species is believed to be ubiquinone. Couples the redox reaction to proton translocation (for every two electrons transferred, four hydrogen ions are translocated across the cytoplasmic membrane), and thus conserves the redox energy in a proton gradient. This is NADH-quinone oxidoreductase subunit K from Pectobacterium carotovorum subsp. carotovorum (strain PC1).